The sequence spans 183 residues: NRR repressor homolog 1 (183 aa).

Disordered stretches follow at residues 1–40 (MEGVDVKAPRPGCGGDDGGAAAASLSARREEEEEGAVVGG) and 66–183 (NGEE…PTDQ). Over residues 31–40 (EEEEGAVVGG) the composition is skewed to acidic residues. Residues 70–79 (GAAGGDGDGA) are compositionally biased toward gly residues. Residues 101-115 (FEFEEAAAGAGDDDA) show a composition bias toward acidic residues. The span at 135 to 145 (AVEKRRTEKEA) shows a compositional bias: basic and acidic residues. Acidic residues predominate over residues 150 to 161 (AEDDDDEQEGGE). Residues 163 to 183 (VEGKEEHRPGRRVEAHGPTDQ) show a composition bias toward basic and acidic residues.

Belongs to the NPR1-interactor family. Interacts with NPR1/NH1. Interacts with NPR3/NH3.

The protein localises to the nucleus. Functionally, binds to and represses NPR1/NH1-mediated transcriptional activation of LG2 in vitro. The polypeptide is NRR repressor homolog 1 (Oryza sativa subsp. japonica (Rice)).